Consider the following 410-residue polypeptide: Cytosolic isocitrate dehydrogenase [NADP] (410 aa).

Residues 77-79 (TIT) and arginine 84 each bind NADP(+). Position 79 (threonine 79) interacts with substrate. Residues 96 to 102 (SPNGTIR), arginine 111, and arginine 134 contribute to the substrate site. Lysine 260 is an NADP(+) binding site. Positions 275 and 279 each coordinate Mn(2+). NADP(+) contacts are provided by residues 310–315 (GTVTRH) and asparagine 328.

This sequence belongs to the isocitrate and isopropylmalate dehydrogenases family. It depends on Mg(2+) as a cofactor. Mn(2+) is required as a cofactor.

The protein localises to the cytoplasm. The protein resides in the cytosol. The catalysed reaction is D-threo-isocitrate + NADP(+) = 2-oxoglutarate + CO2 + NADPH. In terms of biological role, may supply 2-oxoglutarate for amino acid biosynthesis and ammonia assimilation via the glutamine synthetase/glutamate synthase (GS/GOGAT) pathway. May be involved in the production of NADPH to promote redox signaling or homeostasis in response to oxidative stress, or redox signaling linked to defense responses. This is Cytosolic isocitrate dehydrogenase [NADP] from Arabidopsis thaliana (Mouse-ear cress).